The sequence spans 195 residues: dITP/XTP pyrophosphatase (195 aa).

8 to 13 (SNNQGK) is a binding site for substrate. Residues E39 and D68 each contribute to the Mg(2+) site. Residue D68 is the Proton acceptor of the active site. Substrate-binding positions include S69, 149-152 (FGYD), K172, and 177-178 (HR).

The protein belongs to the HAM1 NTPase family. As to quaternary structure, homodimer. Mg(2+) is required as a cofactor.

It carries out the reaction XTP + H2O = XMP + diphosphate + H(+). The catalysed reaction is dITP + H2O = dIMP + diphosphate + H(+). It catalyses the reaction ITP + H2O = IMP + diphosphate + H(+). Pyrophosphatase that catalyzes the hydrolysis of nucleoside triphosphates to their monophosphate derivatives, with a high preference for the non-canonical purine nucleotides XTP (xanthosine triphosphate), dITP (deoxyinosine triphosphate) and ITP. Seems to function as a house-cleaning enzyme that removes non-canonical purine nucleotides from the nucleotide pool, thus preventing their incorporation into DNA/RNA and avoiding chromosomal lesions. In Staphylococcus aureus (strain Mu50 / ATCC 700699), this protein is dITP/XTP pyrophosphatase.